The following is a 788-amino-acid chain: Phosphoribosylformylglycinamidine synthase subunit PurL (788 aa).

Residue H50 is part of the active site. 2 residues coordinate ATP: Y53 and K92. Mg(2+) is bound at residue E94. Substrate-binding positions include 95–98 and R117; that span reads SHNH. The Proton acceptor role is filled by H96. A Mg(2+)-binding site is contributed by D118. Residue Q241 coordinates substrate. D269 is a binding site for Mg(2+). 313–315 is a substrate binding site; the sequence is ESQ. D524 and G561 together coordinate ATP. N562 serves as a coordination point for Mg(2+). Residue S564 participates in substrate binding.

Belongs to the FGAMS family. Monomer. Part of the FGAM synthase complex composed of 1 PurL, 1 PurQ and 2 PurS subunits.

It localises to the cytoplasm. The catalysed reaction is N(2)-formyl-N(1)-(5-phospho-beta-D-ribosyl)glycinamide + L-glutamine + ATP + H2O = 2-formamido-N(1)-(5-O-phospho-beta-D-ribosyl)acetamidine + L-glutamate + ADP + phosphate + H(+). It participates in purine metabolism; IMP biosynthesis via de novo pathway; 5-amino-1-(5-phospho-D-ribosyl)imidazole from N(2)-formyl-N(1)-(5-phospho-D-ribosyl)glycinamide: step 1/2. Part of the phosphoribosylformylglycinamidine synthase complex involved in the purines biosynthetic pathway. Catalyzes the ATP-dependent conversion of formylglycinamide ribonucleotide (FGAR) and glutamine to yield formylglycinamidine ribonucleotide (FGAM) and glutamate. The FGAM synthase complex is composed of three subunits. PurQ produces an ammonia molecule by converting glutamine to glutamate. PurL transfers the ammonia molecule to FGAR to form FGAM in an ATP-dependent manner. PurS interacts with PurQ and PurL and is thought to assist in the transfer of the ammonia molecule from PurQ to PurL. This is Phosphoribosylformylglycinamidine synthase subunit PurL from Nostoc punctiforme (strain ATCC 29133 / PCC 73102).